A 195-amino-acid polypeptide reads, in one-letter code: Imidazoleglycerol-phosphate dehydratase (195 aa).

The protein belongs to the imidazoleglycerol-phosphate dehydratase family.

The protein resides in the cytoplasm. It carries out the reaction D-erythro-1-(imidazol-4-yl)glycerol 3-phosphate = 3-(imidazol-4-yl)-2-oxopropyl phosphate + H2O. It functions in the pathway amino-acid biosynthesis; L-histidine biosynthesis; L-histidine from 5-phospho-alpha-D-ribose 1-diphosphate: step 6/9. In Geobacter metallireducens (strain ATCC 53774 / DSM 7210 / GS-15), this protein is Imidazoleglycerol-phosphate dehydratase.